The following is a 240-amino-acid chain: Splicing factor rtf2 (240 aa).

2 disordered regions span residues 1 to 22 (MGNDGGSLPTRNELVKEPGKVP) and 181 to 240 (SLNK…RVKI). Positions 185–210 (ASKKSNKNGDKKRKHVSKSNSKHAKH) are enriched in basic residues. Basic and acidic residues-rich tracts occupy residues 211 to 224 (ELRTNRMLDGENVK) and 231 to 240 (DMERVKRVKI).

The protein belongs to the rtf2 family. In terms of assembly, interacts with pcn1.

It localises to the nucleus. In terms of biological role, putative splicing factor that is required for the correct splicing of a subset of pre-mRNAs. Required for the correct splicing of rtf1, a replication termination factor that mediates site-specific replication termination at replication barrier RTS1. The polypeptide is Splicing factor rtf2 (Schizosaccharomyces pombe (strain 972 / ATCC 24843) (Fission yeast)).